A 559-amino-acid chain; its full sequence is Pentatricopeptide repeat-containing protein At1g08610 (559 aa).

PPR repeat units lie at residues 103 to 137 (DEETNNEILHNLCSNGKLTDACKLVEVMARHNQVP), 138 to 172 (HFPSCSNLVRGLARIDQLDKAMCILRVMVMSGGVP), 173 to 207 (DTITYNMIIGNLCKKGHIRTALVLLEDMSLSGSPP), 208 to 242 (DVITYNTVIRCMFDYGNAEQAIRFWKDQLQNGCPP), 243 to 277 (FMITYTVLVELVCRYCGSARAIEVLEDMAVEGCYP), 278 to 312 (DIVTYNSLVNYNCRRGNLEEVASVIQHILSHGLEL), 313 to 347 (NTVTYNTLLHSLCSHEYWDEVEEILNIMYQTSYCP), 348 to 382 (TVITYNILINGLCKARLLSRAIDFFYQMLEQKCLP), 383 to 417 (DIVTYNTVLGAMSKEGMVDDAIELLGLLKNTCCPP), 418 to 452 (GLITYNSVIDGLAKKGLMKKALELYHQMLDAGIFP), 453 to 487 (DDITRRSLIYGFCRANLVEEAGQVLKETSNRGNGI), 488 to 522 (RGSTYRLVIQGLCKKKEIEMAIEVVEIMLTGGCKP), and 523 to 557 (DETIYTAIVKGVEEMGMGSEAVQLQKKLKQWKLLK).

This sequence belongs to the PPR family. P subfamily.

This Arabidopsis thaliana (Mouse-ear cress) protein is Pentatricopeptide repeat-containing protein At1g08610.